The following is a 154-amino-acid chain: SsrA-binding protein (154 aa).

This sequence belongs to the SmpB family.

The protein resides in the cytoplasm. In terms of biological role, required for rescue of stalled ribosomes mediated by trans-translation. Binds to transfer-messenger RNA (tmRNA), required for stable association of tmRNA with ribosomes. tmRNA and SmpB together mimic tRNA shape, replacing the anticodon stem-loop with SmpB. tmRNA is encoded by the ssrA gene; the 2 termini fold to resemble tRNA(Ala) and it encodes a 'tag peptide', a short internal open reading frame. During trans-translation Ala-aminoacylated tmRNA acts like a tRNA, entering the A-site of stalled ribosomes, displacing the stalled mRNA. The ribosome then switches to translate the ORF on the tmRNA; the nascent peptide is terminated with the 'tag peptide' encoded by the tmRNA and targeted for degradation. The ribosome is freed to recommence translation, which seems to be the essential function of trans-translation. This Gluconacetobacter diazotrophicus (strain ATCC 49037 / DSM 5601 / CCUG 37298 / CIP 103539 / LMG 7603 / PAl5) protein is SsrA-binding protein.